The chain runs to 324 residues: Beta-ketoacyl-[acyl-carrier-protein] synthase III (324 aa).

Residues cysteine 112 and histidine 251 contribute to the active site. The segment at 252–256 is ACP-binding; it reads QANLR. The active site involves asparagine 281.

The protein belongs to the thiolase-like superfamily. FabH family. In terms of assembly, homodimer.

The protein localises to the cytoplasm. The enzyme catalyses malonyl-[ACP] + acetyl-CoA + H(+) = 3-oxobutanoyl-[ACP] + CO2 + CoA. Its pathway is lipid metabolism; fatty acid biosynthesis. In terms of biological role, catalyzes the condensation reaction of fatty acid synthesis by the addition to an acyl acceptor of two carbons from malonyl-ACP. Catalyzes the first condensation reaction which initiates fatty acid synthesis and may therefore play a role in governing the total rate of fatty acid production. Possesses both acetoacetyl-ACP synthase and acetyl transacylase activities. Its substrate specificity determines the biosynthesis of branched-chain and/or straight-chain of fatty acids. The sequence is that of Beta-ketoacyl-[acyl-carrier-protein] synthase III from Clostridium perfringens (strain 13 / Type A).